The chain runs to 218 residues: Ribosome maturation factor RimM (218 aa).

The 74-residue stretch at 141 to 214 (GELWWDRDLV…HIVVDPPPGL (74 aa)) folds into the PRC barrel domain.

The protein belongs to the RimM family. Binds ribosomal protein uS19.

The protein resides in the cytoplasm. In terms of biological role, an accessory protein needed during the final step in the assembly of 30S ribosomal subunit, possibly for assembly of the head region. Essential for efficient processing of 16S rRNA. May be needed both before and after RbfA during the maturation of 16S rRNA. It has affinity for free ribosomal 30S subunits but not for 70S ribosomes. The protein is Ribosome maturation factor RimM of Parafrankia sp. (strain EAN1pec).